The following is a 505-amino-acid chain: tRNA-2-methylthio-N(6)-dimethylallyladenosine synthase (505 aa).

In terms of domain architecture, MTTase N-terminal spans 14–132 (RTYEVRTYGC…LPVLLERARV (119 aa)). [4Fe-4S] cluster-binding residues include Cys23, Cys61, Cys95, Cys169, Cys173, and Cys176. One can recognise a Radical SAM core domain in the interval 155–386 (RESAYAAWVS…ALQEEISWEE (232 aa)). The 69-residue stretch at 388-456 (KKQVGRTLEL…PHHLLAEGPV (69 aa)) folds into the TRAM domain.

Belongs to the methylthiotransferase family. MiaB subfamily. In terms of assembly, monomer. It depends on [4Fe-4S] cluster as a cofactor.

Its subcellular location is the cytoplasm. It carries out the reaction N(6)-dimethylallyladenosine(37) in tRNA + (sulfur carrier)-SH + AH2 + 2 S-adenosyl-L-methionine = 2-methylsulfanyl-N(6)-dimethylallyladenosine(37) in tRNA + (sulfur carrier)-H + 5'-deoxyadenosine + L-methionine + A + S-adenosyl-L-homocysteine + 2 H(+). Catalyzes the methylthiolation of N6-(dimethylallyl)adenosine (i(6)A), leading to the formation of 2-methylthio-N6-(dimethylallyl)adenosine (ms(2)i(6)A) at position 37 in tRNAs that read codons beginning with uridine. This Streptomyces viridosporus (strain ATCC 14672 / DSM 40746 / JCM 4963 / KCTC 9882 / NRRL B-12104 / FH 1290) (Streptomyces ghanaensis) protein is tRNA-2-methylthio-N(6)-dimethylallyladenosine synthase.